The following is a 122-amino-acid chain: Large ribosomal subunit protein uL14 (122 aa).

Belongs to the universal ribosomal protein uL14 family. As to quaternary structure, part of the 50S ribosomal subunit. Forms a cluster with proteins L3 and L19. In the 70S ribosome, L14 and L19 interact and together make contacts with the 16S rRNA in bridges B5 and B8.

Functionally, binds to 23S rRNA. Forms part of two intersubunit bridges in the 70S ribosome. This Ectopseudomonas mendocina (strain ymp) (Pseudomonas mendocina) protein is Large ribosomal subunit protein uL14.